Consider the following 311-residue polypeptide: E3 ubiquitin-protein ligase RNF126 (311 aa).

Residues cysteine 13, cysteine 16, cysteine 29, and cysteine 32 each coordinate Zn(2+). Residues 13–32 (CHSCTAEIIPRLPEYTCPRC) form a C4-type zinc finger. Disordered regions lie at residues 42 to 62 (ETRN…NRPS) and 95 to 133 (GTSG…RRAA). Residues 101–114 (EEPRDGESRREHQS) show a composition bias toward basic and acidic residues. Positions 123-133 (PRARLSTRRAA) are enriched in basic residues. An RING-type zinc finger spans residues 227-268 (CPVCKEDYTVGESVRQLPCNHLFHNDCIIPWLEQHDTCPVCR). Residues 274 to 311 (QNTATNPPGLTEMTFSSSSTSSSSSTSPTDENNAANNS) form a disordered region. Over residues 289-300 (SSSSTSSSSSTS) the composition is skewed to low complexity. A compositionally biased stretch (polar residues) spans 301-311 (PTDENNAANNS).

The protein resides in the cytoplasm. The protein localises to the nucleus. The catalysed reaction is S-ubiquitinyl-[E2 ubiquitin-conjugating enzyme]-L-cysteine + [acceptor protein]-L-lysine = [E2 ubiquitin-conjugating enzyme]-L-cysteine + N(6)-ubiquitinyl-[acceptor protein]-L-lysine.. Its pathway is protein modification; protein ubiquitination. Functionally, E3 ubiquitin-protein ligase that mediates ubiquitination oF target proteins. Depending on the associated E2 ligase, mediates 'Lys-27'-, 'Lys-29'-, 'Lys-48'- and/or 'Lys-63'-linked polyubiquitination of substrates. Part of a BAG6-dependent quality control process ensuring that proteins of the secretory pathway that are mislocalized to the cytosol are degraded by the proteasome. Probably acts by providing the ubiquitin ligase activity associated with the BAG6 complex and be responsible for ubiquitination of the hydrophobic mislocalized proteins and their targeting to the proteasome. In Xenopus tropicalis (Western clawed frog), this protein is E3 ubiquitin-protein ligase RNF126.